Consider the following 44-residue polypeptide: Phosphatase RapA inhibitor (44 aa).

Positions 1–39 (MKSKWMSGLLLVAVGFSFTQVMVHAGETANTEGKTFHIA) are excised as a propeptide.

Belongs to the Phr family. In terms of assembly, interacts with RapA and inhibits its interaction with Spo0F. In terms of processing, secreted with a propeptide domain, which is cleaved in the cell wall by the secreted serine proteases subtilisin and Vpr to produce a mature signaling peptide. Contains a predicted signal peptide cleavage site in the N-terminal region, however the propeptide is probably subject to only one processing event, at the N-terminal end of the mature peptide.

The protein resides in the secreted. It is found in the cytoplasm. Its activity is regulated as follows. Inhibition of RapA requires a free carboxylate group at the C-terminal end of the PhrA pentapeptide. A free C-terminal carboxylic acid PhrA pentapeptide inhibits RapA phosphatase activity at a 1:1 ratio and is approximately 200 fold more active than a C-terminal amide peptide. Signaling molecule involved in the regulation of sporulation. Secreted during production, but the mature peptide acts intracellularly, indicating that it needs to be imported into the cell to function. Inhibitor of the RapA phosphatase activity. Does not act on RapB. The chain is Phosphatase RapA inhibitor from Bacillus subtilis (strain 168).